Here is a 113-residue protein sequence, read N- to C-terminus: Cell cycle protein GpsB (113 aa).

Positions 32 to 70 form a coiled coil; sequence LDSVIKDYENFGKEIERMKNENDRLTDKVDELNKQVSAG.

The protein belongs to the GpsB family. As to quaternary structure, forms polymers through the coiled coil domains. Interacts with PBP1, MreC and EzrA.

The protein resides in the cytoplasm. Divisome component that associates with the complex late in its assembly, after the Z-ring is formed, and is dependent on DivIC and PBP2B for its recruitment to the divisome. Together with EzrA, is a key component of the system that regulates PBP1 localization during cell cycle progression. Its main role could be the removal of PBP1 from the cell pole after pole maturation is completed. Also contributes to the recruitment of PBP1 to the division complex. Not essential for septum formation. The polypeptide is Cell cycle protein GpsB (Pediococcus pentosaceus (strain ATCC 25745 / CCUG 21536 / LMG 10740 / 183-1w)).